The sequence spans 269 residues: UPF0494 membrane protein C1348.01 (269 aa).

The next 4 membrane-spanning stretches (helical) occupy residues 107-127 (WPLL…KFEV), 144-164 (IWVP…SLIF), 177-197 (GVII…IAAL), and 201-221 (ITGL…LSLG).

The protein belongs to the UPF0494 family.

It localises to the vacuole membrane. The polypeptide is UPF0494 membrane protein C1348.01 (Schizosaccharomyces pombe (strain 972 / ATCC 24843) (Fission yeast)).